The primary structure comprises 204 residues: MAGSRRKSPGITPDILLRAYSIGLFPMAESADDPEIFWVEPELRGVLPLDHFHISKSLAKTVRRNPFEIRFDHAFESVIAACAEETSGRPSTWINQTIRSLYSTLFDMGHAHTVEAWHGDELVGGLYGVSLGSAFFGESMFSRRTDASKICLVHLVDRLRNKGFTLLDTQFTTEHLKTFGAIDVPKADYALLLAAAMESPHLKF.

This sequence belongs to the L/F-transferase family.

Its subcellular location is the cytoplasm. It carries out the reaction N-terminal L-lysyl-[protein] + L-leucyl-tRNA(Leu) = N-terminal L-leucyl-L-lysyl-[protein] + tRNA(Leu) + H(+). It catalyses the reaction N-terminal L-arginyl-[protein] + L-leucyl-tRNA(Leu) = N-terminal L-leucyl-L-arginyl-[protein] + tRNA(Leu) + H(+). The enzyme catalyses L-phenylalanyl-tRNA(Phe) + an N-terminal L-alpha-aminoacyl-[protein] = an N-terminal L-phenylalanyl-L-alpha-aminoacyl-[protein] + tRNA(Phe). Functionally, functions in the N-end rule pathway of protein degradation where it conjugates Leu, Phe and, less efficiently, Met from aminoacyl-tRNAs to the N-termini of proteins containing an N-terminal arginine or lysine. The chain is Leucyl/phenylalanyl-tRNA--protein transferase from Rhizobium etli (strain CIAT 652).